Consider the following 447-residue polypeptide: Exodeoxyribonuclease 7 large subunit (447 aa).

This sequence belongs to the XseA family. As to quaternary structure, heterooligomer composed of large and small subunits.

It is found in the cytoplasm. The catalysed reaction is Exonucleolytic cleavage in either 5'- to 3'- or 3'- to 5'-direction to yield nucleoside 5'-phosphates.. Bidirectionally degrades single-stranded DNA into large acid-insoluble oligonucleotides, which are then degraded further into small acid-soluble oligonucleotides. The sequence is that of Exodeoxyribonuclease 7 large subunit from Pediococcus pentosaceus (strain ATCC 25745 / CCUG 21536 / LMG 10740 / 183-1w).